Reading from the N-terminus, the 142-residue chain is Transcriptional regulator MraZ (142 aa).

SpoVT-AbrB domains follow at residues 5 to 51 (ASAL…PRPE) and 77 to 120 (AMDV…DSQT).

It belongs to the MraZ family. As to quaternary structure, forms oligomers.

The protein localises to the cytoplasm. The protein resides in the nucleoid. This chain is Transcriptional regulator MraZ, found in Burkholderia cenocepacia (strain ATCC BAA-245 / DSM 16553 / LMG 16656 / NCTC 13227 / J2315 / CF5610) (Burkholderia cepacia (strain J2315)).